A 178-amino-acid chain; its full sequence is Mediator of RNA polymerase II transcription subunit 31 (178 aa).

Over residues 129–140 (EGQELEESEDEA) the composition is skewed to acidic residues. The interval 129–178 (EGQELEESEDEADIRQKDTEDEDDEETMKKPDADTAEKNSTTSTVSKKEK) is disordered. The span at 155 to 165 (TMKKPDADTAE) shows a compositional bias: basic and acidic residues. The segment covering 166-178 (KNSTTSTVSKKEK) has biased composition (polar residues).

It belongs to the Mediator complex subunit 31 family. As to quaternary structure, component of the Mediator complex.

The protein localises to the nucleus. Its function is as follows. Component of the Mediator complex, a coactivator involved in the regulated transcription of nearly all RNA polymerase II-dependent genes. Mediator functions as a bridge to convey information from gene-specific regulatory proteins to the basal RNA polymerase II transcription machinery. Mediator is recruited to promoters by direct interactions with regulatory proteins and serves as a scaffold for the assembly of a functional preinitiation complex with RNA polymerase II and the general transcription factors. This is Mediator of RNA polymerase II transcription subunit 31 from Caenorhabditis elegans.